The sequence spans 195 residues: dCTP deaminase (195 aa).

DCTP contacts are provided by residues 109 to 114, Asp-127, 135 to 137, Tyr-170, Lys-177, and Gln-181; these read RSSLAR and TLE. Glu-137 functions as the Proton donor/acceptor in the catalytic mechanism.

The protein belongs to the dCTP deaminase family. Homotrimer.

The enzyme catalyses dCTP + H2O + H(+) = dUTP + NH4(+). It functions in the pathway pyrimidine metabolism; dUMP biosynthesis; dUMP from dCTP (dUTP route): step 1/2. Its function is as follows. Catalyzes the deamination of dCTP to dUTP. The polypeptide is dCTP deaminase (Rhodospirillum rubrum (strain ATCC 11170 / ATH 1.1.1 / DSM 467 / LMG 4362 / NCIMB 8255 / S1)).